The primary structure comprises 1409 residues: Protein three rows (1409 aa).

The interval valine 1052–glutamine 1058 is separase cleavage-site. Disordered stretches follow at residues proline 1260–valine 1284 and aspartate 1297–asparagine 1409. 2 stretches are compositionally biased toward low complexity: residues serine 1264–serine 1273 and alanine 1300–serine 1310.

In terms of assembly, interacts with pim and Sse. Cleavage of thr contributes to inactivation of Sse.

The protein localises to the cytoplasm. Its function is as follows. Required specifically for chromosome disjunction during all mitoses; maternally provided protein is sufficient until mitosis 14 then zygotic protein is required. Involved in formation and/or maintenance of epithelial structures: bud extension during Malpighian tubule development, and foregut and hindgut morphogenesis. In Drosophila pseudoobscura pseudoobscura (Fruit fly), this protein is Protein three rows (thr).